A 468-amino-acid polypeptide reads, in one-letter code: 6-phospho-beta-galactosidase (468 aa).

Residues Q19, H116, N159, E160, and N297 each contribute to the D-galactose 6-phosphate site. E160 functions as the Proton donor in the catalytic mechanism. The Nucleophile role is filled by E375. S428, W429, K435, and Y437 together coordinate D-galactose 6-phosphate.

The protein belongs to the glycosyl hydrolase 1 family.

The enzyme catalyses a 6-phospho-beta-D-galactoside + H2O = D-galactose 6-phosphate + an alcohol. The protein operates within carbohydrate metabolism; lactose degradation; D-galactose 6-phosphate and beta-D-glucose from lactose 6-phosphate: step 1/1. In Streptococcus pyogenes serotype M12 (strain MGAS2096), this protein is 6-phospho-beta-galactosidase.